Here is a 98-residue protein sequence, read N- to C-terminus: NADH-ubiquinone oxidoreductase chain 4L (98 aa).

3 consecutive transmembrane segments (helical) span residues M1–V21, S29–L49, and I58–L78.

This sequence belongs to the complex I subunit 4L family. Core subunit of respiratory chain NADH dehydrogenase (Complex I) which is composed of 45 different subunits.

It localises to the mitochondrion inner membrane. It catalyses the reaction a ubiquinone + NADH + 5 H(+)(in) = a ubiquinol + NAD(+) + 4 H(+)(out). In terms of biological role, core subunit of the mitochondrial membrane respiratory chain NADH dehydrogenase (Complex I) which catalyzes electron transfer from NADH through the respiratory chain, using ubiquinone as an electron acceptor. Part of the enzyme membrane arm which is embedded in the lipid bilayer and involved in proton translocation. The polypeptide is NADH-ubiquinone oxidoreductase chain 4L (MT-ND4L) (Pongo abelii (Sumatran orangutan)).